The chain runs to 361 residues: Ribosomal RNA large subunit methyltransferase M (361 aa).

Residues S187, C220–G223, D239, D259, and D276 each bind S-adenosyl-L-methionine. K305 acts as the Proton acceptor in catalysis.

It belongs to the class I-like SAM-binding methyltransferase superfamily. RNA methyltransferase RlmE family. RlmM subfamily. Monomer.

It localises to the cytoplasm. The enzyme catalyses cytidine(2498) in 23S rRNA + S-adenosyl-L-methionine = 2'-O-methylcytidine(2498) in 23S rRNA + S-adenosyl-L-homocysteine + H(+). Functionally, catalyzes the 2'-O-methylation at nucleotide C2498 in 23S rRNA. In Shewanella putrefaciens (strain CN-32 / ATCC BAA-453), this protein is Ribosomal RNA large subunit methyltransferase M.